Reading from the N-terminus, the 235-residue chain is Ubiquinone/menaquinone biosynthesis C-methyltransferase UbiE (235 aa).

Residues Thr-60, Asp-80, 106–107 (DV), and Ser-123 each bind S-adenosyl-L-methionine.

The protein belongs to the class I-like SAM-binding methyltransferase superfamily. MenG/UbiE family.

The catalysed reaction is a 2-demethylmenaquinol + S-adenosyl-L-methionine = a menaquinol + S-adenosyl-L-homocysteine + H(+). It catalyses the reaction a 2-methoxy-6-(all-trans-polyprenyl)benzene-1,4-diol + S-adenosyl-L-methionine = a 5-methoxy-2-methyl-3-(all-trans-polyprenyl)benzene-1,4-diol + S-adenosyl-L-homocysteine + H(+). It functions in the pathway quinol/quinone metabolism; menaquinone biosynthesis; menaquinol from 1,4-dihydroxy-2-naphthoate: step 2/2. Its pathway is cofactor biosynthesis; ubiquinone biosynthesis. Its function is as follows. Methyltransferase required for the conversion of demethylmenaquinol (DMKH2) to menaquinol (MKH2) and the conversion of 2-polyprenyl-6-methoxy-1,4-benzoquinol (DDMQH2) to 2-polyprenyl-3-methyl-6-methoxy-1,4-benzoquinol (DMQH2). The chain is Ubiquinone/menaquinone biosynthesis C-methyltransferase UbiE from Bdellovibrio bacteriovorus (strain ATCC 15356 / DSM 50701 / NCIMB 9529 / HD100).